The primary structure comprises 419 residues: Phospho-N-acetylmuramoyl-pentapeptide-transferase (419 aa).

10 consecutive transmembrane segments (helical) span residues Y22–G42, T72–A92, L94–F114, I135–V155, A210–A230, G238–S258, F266–I286, F303–I323, L327–V347, and K396–L416.

Belongs to the glycosyltransferase 4 family. MraY subfamily. Mg(2+) serves as cofactor.

It localises to the cell inner membrane. It carries out the reaction UDP-N-acetyl-alpha-D-muramoyl-L-alanyl-gamma-D-glutamyl-meso-2,6-diaminopimeloyl-D-alanyl-D-alanine + di-trans,octa-cis-undecaprenyl phosphate = di-trans,octa-cis-undecaprenyl diphospho-N-acetyl-alpha-D-muramoyl-L-alanyl-D-glutamyl-meso-2,6-diaminopimeloyl-D-alanyl-D-alanine + UMP. The protein operates within cell wall biogenesis; peptidoglycan biosynthesis. In terms of biological role, catalyzes the initial step of the lipid cycle reactions in the biosynthesis of the cell wall peptidoglycan: transfers peptidoglycan precursor phospho-MurNAc-pentapeptide from UDP-MurNAc-pentapeptide onto the lipid carrier undecaprenyl phosphate, yielding undecaprenyl-pyrophosphoryl-MurNAc-pentapeptide, known as lipid I. This Parabacteroides distasonis (strain ATCC 8503 / DSM 20701 / CIP 104284 / JCM 5825 / NCTC 11152) protein is Phospho-N-acetylmuramoyl-pentapeptide-transferase.